We begin with the raw amino-acid sequence, 160 residues long: MPRIRIAWGSGVAPTEMAAYDAALADANVHNYNLIRVSSVIPADATVSPVDTAPDLGPAGNTLTVVEARGQTAGPGQASAGLAWAPRDGAPGLFYEAADETTPDDVADRVTTGITAGMDVRDWDGVEPSVRTETVTADAGEHAAAVVIAAYGDSDPVFDQ.

Residue serine 39 is modified to Pyruvic acid (Ser).

The protein belongs to the PdaD family. Pyruvate is required as a cofactor.

It catalyses the reaction L-arginine + H(+) = agmatine + CO2. This Halobacterium salinarum (strain ATCC 29341 / DSM 671 / R1) protein is Pyruvoyl-dependent arginine decarboxylase (pdaD).